We begin with the raw amino-acid sequence, 192 residues long: Superoxide dismutase [Fe] (192 aa).

The Fe cation site is built by histidine 27, histidine 74, aspartate 157, and histidine 161.

Belongs to the iron/manganese superoxide dismutase family. In terms of assembly, homodimer. It depends on Fe cation as a cofactor.

It carries out the reaction 2 superoxide + 2 H(+) = H2O2 + O2. Destroys superoxide anion radicals which are normally produced within the cells and which are toxic to biological systems. The protein is Superoxide dismutase [Fe] (sodB) of Legionella pneumophila subsp. pneumophila (strain Philadelphia 1 / ATCC 33152 / DSM 7513).